A 241-amino-acid polypeptide reads, in one-letter code: Small ribosomal subunit protein uS3c (241 aa).

It belongs to the universal ribosomal protein uS3 family. In terms of assembly, part of the 30S ribosomal subunit.

The protein resides in the plastid. The polypeptide is Small ribosomal subunit protein uS3c (rps3) (Helicosporidium sp. subsp. Simulium jonesii (Green alga)).